Consider the following 451-residue polypeptide: UDP-N-acetylmuramoylalanine--D-glutamate ligase (451 aa).

Position 119 to 125 (119 to 125 (GSNGKTT)) interacts with ATP.

The protein belongs to the MurCDEF family.

Its subcellular location is the cytoplasm. The catalysed reaction is UDP-N-acetyl-alpha-D-muramoyl-L-alanine + D-glutamate + ATP = UDP-N-acetyl-alpha-D-muramoyl-L-alanyl-D-glutamate + ADP + phosphate + H(+). The protein operates within cell wall biogenesis; peptidoglycan biosynthesis. Functionally, cell wall formation. Catalyzes the addition of glutamate to the nucleotide precursor UDP-N-acetylmuramoyl-L-alanine (UMA). The chain is UDP-N-acetylmuramoylalanine--D-glutamate ligase from Bacillus cytotoxicus (strain DSM 22905 / CIP 110041 / 391-98 / NVH 391-98).